The chain runs to 407 residues: 4-hydroxy-3-methylbut-2-en-1-yl diphosphate synthase (ferredoxin) (407 aa).

Positions 316, 319, 350, and 357 each coordinate [4Fe-4S] cluster.

Belongs to the IspG family. [4Fe-4S] cluster is required as a cofactor.

It catalyses the reaction (2E)-4-hydroxy-3-methylbut-2-enyl diphosphate + 2 oxidized [2Fe-2S]-[ferredoxin] + H2O = 2-C-methyl-D-erythritol 2,4-cyclic diphosphate + 2 reduced [2Fe-2S]-[ferredoxin] + H(+). It functions in the pathway isoprenoid biosynthesis; isopentenyl diphosphate biosynthesis via DXP pathway; isopentenyl diphosphate from 1-deoxy-D-xylulose 5-phosphate: step 5/6. Its function is as follows. Converts 2C-methyl-D-erythritol 2,4-cyclodiphosphate (ME-2,4cPP) into 1-hydroxy-2-methyl-2-(E)-butenyl 4-diphosphate. This chain is 4-hydroxy-3-methylbut-2-en-1-yl diphosphate synthase (ferredoxin), found in Cyanothece sp. (strain PCC 7425 / ATCC 29141).